Consider the following 357-residue polypeptide: Quinolinate synthase (357 aa).

2 residues coordinate iminosuccinate: His50 and Ser71. Cys116 is a binding site for [4Fe-4S] cluster. Iminosuccinate contacts are provided by residues 142–144 and Ser159; that span reads YAN. Cys203 provides a ligand contact to [4Fe-4S] cluster. Iminosuccinate-binding positions include 229-231 and Thr246; that span reads HPE. Cys300 lines the [4Fe-4S] cluster pocket.

It belongs to the quinolinate synthase family. Type 1 subfamily. [4Fe-4S] cluster serves as cofactor.

It localises to the cytoplasm. The enzyme catalyses iminosuccinate + dihydroxyacetone phosphate = quinolinate + phosphate + 2 H2O + H(+). The protein operates within cofactor biosynthesis; NAD(+) biosynthesis; quinolinate from iminoaspartate: step 1/1. Catalyzes the condensation of iminoaspartate with dihydroxyacetone phosphate to form quinolinate. The polypeptide is Quinolinate synthase (Shewanella sp. (strain MR-4)).